The following is a 353-amino-acid chain: MTEPLKPRIDFDGPLEVEQNPKFRAQQTFDENQAQNFAPATLDEAQEEEGQVEAVMDAALRPKRSLWRKMVMGGLALFGASVVGQGVQWTMNAWQTQDWVALGGCAAGALIIGAGVGSVVTEWRRLWRLRQRAHERDEARDLLHSHGTGKGRAFCEKLAQQAGIDQSHPALQRWYASIHETQNDREVVSLYAHLVQPVLDAQARREISRSAAESTLMIAVSPLALVDMAFIAWRNLRLINRIATLYGIELGYYSRLRLFKLVLLNIAFAGASELVREVGMDWMSQDLAARLSTRAAQGIGAGLLTARLGIKAMELCRPLPWIDDDKPRLGDFRRQLIGQVKETLQKGKTPSEK.

At 1 to 69 the chain is on the periplasmic side; sequence MTEPLKPRID…LRPKRSLWRK (69 aa). A helical transmembrane segment spans residues 70–90; sequence MVMGGLALFGASVVGQGVQWT. Residues 91–99 are Cytoplasmic-facing; the sequence is MNAWQTQDW. Residues 100–120 form a helical membrane-spanning segment; it reads VALGGCAAGALIIGAGVGSVV. Over 121–212 the chain is Periplasmic; that stretch reads TEWRRLWRLR…ARREISRSAA (92 aa). Residues 213–233 form a helical membrane-spanning segment; the sequence is ESTLMIAVSPLALVDMAFIAW. The Cytoplasmic segment spans residues 234 to 353; sequence RNLRLINRIA…LQKGKTPSEK (120 aa).

Belongs to the UPF0283 family.

It localises to the cell inner membrane. This Escherichia coli O157:H7 protein is UPF0283 membrane protein YcjF (ycjF).